The sequence spans 130 residues: Small ribosomal subunit protein uS8 (130 aa).

The protein belongs to the universal ribosomal protein uS8 family. In terms of assembly, part of the 30S ribosomal subunit. Contacts proteins S5 and S12.

Its function is as follows. One of the primary rRNA binding proteins, it binds directly to 16S rRNA central domain where it helps coordinate assembly of the platform of the 30S subunit. The polypeptide is Small ribosomal subunit protein uS8 (Shewanella piezotolerans (strain WP3 / JCM 13877)).